The following is a 166-amino-acid chain: Cytochrome c-type biogenesis protein CcmE (166 aa).

The Cytoplasmic portion of the chain corresponds to 1 to 8; sequence MNAVRRKK. Residues 9–29 traverse the membrane as a helical; Signal-anchor for type II membrane protein segment; the sequence is LMWVMFTLAGAVIAVALVIYA. Topologically, residues 30-166 are periplasmic; it reads IGKQTDYYFD…KLHETKTLQQ (137 aa). The heme site is built by histidine 124 and tyrosine 128. Residues 133–166 are disordered; it reads VAKSMKENNRSGAVPSSEQYNPAEKLHETKTLQQ. Positions 142 to 152 are enriched in polar residues; it reads RSGAVPSSEQY. Positions 156–166 are enriched in basic and acidic residues; sequence EKLHETKTLQQ.

This sequence belongs to the CcmE/CycJ family.

Its subcellular location is the cell inner membrane. Functionally, heme chaperone required for the biogenesis of c-type cytochromes. Transiently binds heme delivered by CcmC and transfers the heme to apo-cytochromes in a process facilitated by CcmF and CcmH. This is Cytochrome c-type biogenesis protein CcmE from Psychrobacter arcticus (strain DSM 17307 / VKM B-2377 / 273-4).